Reading from the N-terminus, the 194-residue chain is Holliday junction branch migration complex subunit RuvA (194 aa).

The segment at 1-64 (MISRLTGKLV…EDAHLLFGFA (64 aa)) is domain I. Residues 65 to 143 (TAEERKTFRQ…AHAVTDGLFA (79 aa)) form a domain II region. A flexible linker region spans residues 144–147 (AAPA). Residues 147-194 (AADETEDIVGTLLALGYSEREAKAAVKGVPEGTDVGEGVRLALKNLLK) form a domain III region.

Belongs to the RuvA family. Homotetramer. Forms an RuvA(8)-RuvB(12)-Holliday junction (HJ) complex. HJ DNA is sandwiched between 2 RuvA tetramers; dsDNA enters through RuvA and exits via RuvB. An RuvB hexamer assembles on each DNA strand where it exits the tetramer. Each RuvB hexamer is contacted by two RuvA subunits (via domain III) on 2 adjacent RuvB subunits; this complex drives branch migration. In the full resolvosome a probable DNA-RuvA(4)-RuvB(12)-RuvC(2) complex forms which resolves the HJ.

The protein localises to the cytoplasm. The RuvA-RuvB-RuvC complex processes Holliday junction (HJ) DNA during genetic recombination and DNA repair, while the RuvA-RuvB complex plays an important role in the rescue of blocked DNA replication forks via replication fork reversal (RFR). RuvA specifically binds to HJ cruciform DNA, conferring on it an open structure. The RuvB hexamer acts as an ATP-dependent pump, pulling dsDNA into and through the RuvAB complex. HJ branch migration allows RuvC to scan DNA until it finds its consensus sequence, where it cleaves and resolves the cruciform DNA. The polypeptide is Holliday junction branch migration complex subunit RuvA (Neisseria meningitidis serogroup A / serotype 4A (strain DSM 15465 / Z2491)).